A 396-amino-acid chain; its full sequence is Activity-regulated cytoskeleton-associated protein (396 aa).

A coiled-coil region spans residues serine 54–tyrosine 78. The tract at residues lysine 89 to glutamate 100 is interaction with SH3GL1 or SH3GL3. The interaction with DNM2 stretch occupies residues glutamine 195–phenylalanine 214. Position 260 is a phosphoserine (serine 260). Residues lysine 268 and lysine 269 each participate in a glycyl lysine isopeptide (Lys-Gly) (interchain with G-Cter in ubiquitin) cross-link. Threonine 278 is subject to Phosphothreonine. The disordered stretch occupies residues glutamine 356 to glutamate 396. Positions proline 381–glutamate 396 are enriched in polar residues.

It belongs to the ARC/ARG3.1 family. In terms of assembly, homooligomer; homooligomerizes into virion-like capsids. Interacts with SH3GL1/endophilin-2, SH3GL3/endophilin-3 and DNM2/DYN2. Interacts with CAMK2B (in the kinase inactive state); leading to target ARC to inactive synapses. Interacts with PSEN1. In terms of processing, palmitoylation anchors the protein into the membrane by allowing direct insertion into the hydrophobic core of the lipid bilayer. Ubiquitinated by UBE3A, leading to its degradation by the proteasome, thereby promoting AMPA receptors (AMPARs) expression at synapses. Ubiquitinated by RNF216 at Lys-268 and Lys-269 limiting ARC protein levels induced by synaptic activity and thus regulating ARC-dependent forms of synaptic plasticity. Post-translationally, phosphorylation at Ser-260 by CaMK2 prevents homooligomerization into virion-like capsids by disrupting an interaction surface essential for high-order oligomerization. Phosphorylation by CaMK2 inhibits synaptic activity.

The protein resides in the extracellular vesicle membrane. It localises to the postsynaptic cell membrane. The protein localises to the synapse. Its subcellular location is the postsynaptic density. It is found in the early endosome membrane. The protein resides in the cell projection. It localises to the dendrite. The protein localises to the cytoplasm. Its subcellular location is the cytoskeleton. It is found in the cell cortex. The protein resides in the dendritic spine. It localises to the cytoplasmic vesicle. The protein localises to the secretory vesicle. Its subcellular location is the acrosome. It is found in the clathrin-coated vesicle membrane. In terms of biological role, master regulator of synaptic plasticity that self-assembles into virion-like capsids that encapsulate RNAs and mediate intercellular RNA transfer in the nervous system. ARC protein is released from neurons in extracellular vesicles that mediate the transfer of ARC mRNA into new target cells, where ARC mRNA can undergo activity-dependent translation. ARC capsids are endocytosed and are able to transfer ARC mRNA into the cytoplasm of neurons. Acts as a key regulator of synaptic plasticity: required for protein synthesis-dependent forms of long-term potentiation (LTP) and depression (LTD) and for the formation of long-term memory. Regulates synaptic plasticity by promoting endocytosis of AMPA receptors (AMPARs) in response to synaptic activity: this endocytic pathway maintains levels of surface AMPARs in response to chronic changes in neuronal activity through synaptic scaling, thereby contributing to neuronal homeostasis. Acts as a postsynaptic mediator of activity-dependent synapse elimination in the developing cerebellum by mediating elimination of surplus climbing fiber synapses. Accumulates at weaker synapses, probably to prevent their undesired enhancement. This suggests that ARC-containing virion-like capsids may be required to eliminate synaptic material. Required to transduce experience into long-lasting changes in visual cortex plasticity and for long-term memory. Involved in postsynaptic trafficking and processing of amyloid-beta A4 (APP) via interaction with PSEN1. In addition to its role in synapses, also involved in the regulation of the immune system: specifically expressed in skin-migratory dendritic cells and regulates fast dendritic cell migration, thereby regulating T-cell activation. The protein is Activity-regulated cytoskeleton-associated protein of Homo sapiens (Human).